The sequence spans 139 residues: uncharacterized protein (139 aa).

Residues Ile5–Gly114 form the HIT domain. The Histidine triad motif motif lies at His99 to His103.

This is an uncharacterized protein from Borreliella burgdorferi (strain ATCC 35210 / DSM 4680 / CIP 102532 / B31) (Borrelia burgdorferi).